Reading from the N-terminus, the 145-residue chain is Transcription antitermination protein NusB (145 aa).

It belongs to the NusB family.

Functionally, involved in transcription antitermination. Required for transcription of ribosomal RNA (rRNA) genes. Binds specifically to the boxA antiterminator sequence of the ribosomal RNA (rrn) operons. The sequence is that of Transcription antitermination protein NusB from Geobacter sp. (strain M21).